The sequence spans 144 residues: Sec-independent protein translocase protein TatB (144 aa).

The chain crosses the membrane as a helical span at residues 1-21 (MFEIGFWELVLVAIIGIVVVG). The tract at residues 97-144 (KMIDEPPYQEPPPAAHSVQTDAEAYRDTGIEPADKSSSPEHHHDDAAR) is disordered. A compositionally biased stretch (basic and acidic residues) spans 119–144 (EAYRDTGIEPADKSSSPEHHHDDAAR).

Belongs to the TatB family. In terms of assembly, the Tat system comprises two distinct complexes: a TatABC complex, containing multiple copies of TatA, TatB and TatC subunits, and a separate TatA complex, containing only TatA subunits. Substrates initially bind to the TatABC complex, which probably triggers association of the separate TatA complex to form the active translocon.

It localises to the cell inner membrane. Functionally, part of the twin-arginine translocation (Tat) system that transports large folded proteins containing a characteristic twin-arginine motif in their signal peptide across membranes. Together with TatC, TatB is part of a receptor directly interacting with Tat signal peptides. TatB may form an oligomeric binding site that transiently accommodates folded Tat precursor proteins before their translocation. This Dichelobacter nodosus (strain VCS1703A) protein is Sec-independent protein translocase protein TatB.